Here is a 596-residue protein sequence, read N- to C-terminus: Arginine--tRNA ligase (596 aa).

The short motif at 128–138 is the 'HIGH' region element; the sequence is ANPTSSLHVGH.

The protein belongs to the class-I aminoacyl-tRNA synthetase family. As to quaternary structure, monomer.

The protein localises to the cytoplasm. The enzyme catalyses tRNA(Arg) + L-arginine + ATP = L-arginyl-tRNA(Arg) + AMP + diphosphate. The sequence is that of Arginine--tRNA ligase from Acinetobacter baylyi (strain ATCC 33305 / BD413 / ADP1).